A 37-amino-acid polypeptide reads, in one-letter code: Large ribosomal subunit protein bL36 (37 aa).

It belongs to the bacterial ribosomal protein bL36 family.

In Desulfitobacterium hafniense (strain Y51), this protein is Large ribosomal subunit protein bL36.